Reading from the N-terminus, the 396-residue chain is Obg-like ATPase 1 (396 aa).

An OBG-type G domain is found at 23-283 (LKIGIVGLPN…LSAEERQKYL (261 aa)). Residue 32–37 (NVGKST) coordinates ATP. Mg(2+) is bound by residues Ser-36 and Thr-56. Leu-231 serves as a coordination point for ATP. Residues 267–274 (LELKLQEL) carry the Nuclear export signal motif. Lys-294 carries the N6-acetyllysine modification. The 84-residue stretch at 304–387 (QLEYFFTAGP…EDGDIIFFKF (84 aa)) folds into the TGS domain.

Belongs to the TRAFAC class OBG-HflX-like GTPase superfamily. OBG GTPase family. YchF/OLA1 subfamily. In terms of assembly, monomer. It depends on Mg(2+) as a cofactor.

It is found in the cytoplasm. Its subcellular location is the nucleus. The protein resides in the nucleolus. In terms of biological role, hydrolyzes ATP, and can also hydrolyze GTP with lower efficiency. Has lower affinity for GTP. This Pongo abelii (Sumatran orangutan) protein is Obg-like ATPase 1.